Consider the following 214-residue polypeptide: Osteoclast-stimulating factor 1 (214 aa).

Residues 12 to 71 enclose the SH3 domain; it reads GQVKVYRALFTFDPRTPDELYFEEGDILYISDTSDSNWWKGTCRGRTGLIPSNYVAEQAE. ANK repeat units lie at residues 72–101, 105–135, and 139–168; these read SIDNPMHEAAKRGNLSWLRECLDNKVGING, AGNTSLYWACHGGHKDVVEILLSQPNCELNQ, and LGDTPLHAAAWKGYSDIVEMLLNKNARTDV.

Its subcellular location is the cytoplasm. Its function is as follows. Induces bone resorption, acting probably through a signaling cascade which results in the secretion of factor(s) enhancing osteoclast formation and activity. This Danio rerio (Zebrafish) protein is Osteoclast-stimulating factor 1 (ostf1).